Here is a 489-residue protein sequence, read N- to C-terminus: Argininosuccinate lyase (489 aa).

The segment at 462 to 489 is disordered; sequence QARYQQTEPAEEPPLPPSSPGSGLPLES.

Belongs to the lyase 1 family. Argininosuccinate lyase subfamily.

The protein localises to the cytoplasm. It carries out the reaction 2-(N(omega)-L-arginino)succinate = fumarate + L-arginine. The protein operates within amino-acid biosynthesis; L-arginine biosynthesis; L-arginine from L-ornithine and carbamoyl phosphate: step 3/3. This chain is Argininosuccinate lyase, found in Synechococcus sp. (strain JA-3-3Ab) (Cyanobacteria bacterium Yellowstone A-Prime).